The sequence spans 479 residues: Protein ORD (479 aa).

Residues 102–140 (KEEETEPESESDLDEGPSTSKQALERMVQRAERKAKEAS) form a disordered region. A compositionally biased stretch (acidic residues) spans 104–116 (EETEPESESDLDE). A compositionally biased stretch (basic and acidic residues) spans 124–140 (ALERMVQRAERKAKEAS).

Interacts with Sce.

The protein localises to the nucleus. Its subcellular location is the chromosome. The protein resides in the centromere. Its function is as follows. Essential for proper maintenance of sister-chromatid cohesion in both male and female meiosis. Mutations in ord cause premature separation of the sister chromatids in meiosis I and random segregation in both meiotic divisions. Required for chiasma maintenance in female meiosis. Mutations in ord reduce recombination in female meiosis. This chain is Protein ORD (ord), found in Drosophila melanogaster (Fruit fly).